A 683-amino-acid polypeptide reads, in one-letter code: Kinesin-like protein KIF2B (683 aa).

Thr125 carries the phosphothreonine; by PLK1 modification. Residues 141 to 176 are a coiled coil; it reads LMTQRKSACLREIEKLQKQRERRRRLHREIRAQRAR. At Ser204 the chain carries Phosphoserine; by PLK1. The region spanning 213-543 is the Kinesin motor domain; that stretch reads RICVCVRKRP…LRYANRVKEI (331 aa). 303-310 serves as a coordination point for ATP; that stretch reads GQTGSGKT. A coiled-coil region spans residues 640 to 672; sequence QLLSILEKKIDILTEIRRKLKLLQADIQKENRH.

This sequence belongs to the TRAFAC class myosin-kinesin ATPase superfamily. Kinesin family. MCAK/KIF2 subfamily. Post-translationally, phosphorylation at Thr-125 by PLK1 is required for activity in the correction of kinetochore-microtubules attachment errors, while phosphorylation at Ser-204 also by PLK1 is required for the kinetochore localization and activity in prometaphase.

Its subcellular location is the cytoplasm. The protein localises to the cytoskeleton. It localises to the microtubule organizing center. The protein resides in the centrosome. It is found in the spindle. Its subcellular location is the chromosome. The protein localises to the centromere. It localises to the kinetochore. Plus end-directed microtubule-dependent motor required for spindle assembly and chromosome movement during mitosis. Has microtubule depolymerization activity. Plays a role in chromosome congression. The sequence is that of Kinesin-like protein KIF2B from Bos taurus (Bovine).